A 341-amino-acid chain; its full sequence is Ubiquinone biosynthesis protein COQ4, mitochondrial (341 aa).

A mitochondrion-targeting transit peptide spans 1–16; that stretch reads MLSRISSVRIGTQVRQ. The Zn(2+) site is built by histidine 220, aspartate 221, histidine 224, and glutamate 236.

This sequence belongs to the COQ4 family. Component of a multi-subunit COQ enzyme complex, composed of at least COQ3, COQ4, COQ5, COQ6, COQ7 and COQ9. It depends on Zn(2+) as a cofactor.

The protein localises to the mitochondrion inner membrane. The enzyme catalyses a 4-hydroxy-3-methoxy-5-(all-trans-polyprenyl)benzoate + H(+) = a 2-methoxy-6-(all-trans-polyprenyl)phenol + CO2. It functions in the pathway cofactor biosynthesis; ubiquinone biosynthesis. Its function is as follows. Lyase that catalyzes the C1-decarboxylation of 4-hydroxy-3-methoxy-5-(all-trans-polyprenyl)benzoic acid into 2-methoxy-6-(all-trans-polyprenyl)phenol during ubiquinone biosynthesis. In Vanderwaltozyma polyspora (strain ATCC 22028 / DSM 70294 / BCRC 21397 / CBS 2163 / NBRC 10782 / NRRL Y-8283 / UCD 57-17) (Kluyveromyces polysporus), this protein is Ubiquinone biosynthesis protein COQ4, mitochondrial.